The following is an 83-amino-acid chain: ATP synthase subunit c (83 aa).

Transmembrane regions (helical) follow at residues Ile10–Leu30 and Met52–Tyr72.

The protein belongs to the ATPase C chain family. As to quaternary structure, F-type ATPases have 2 components, F(1) - the catalytic core - and F(0) - the membrane proton channel. F(1) has five subunits: alpha(3), beta(3), gamma(1), delta(1), epsilon(1). F(0) has three main subunits: a(1), b(2) and c(10-14). The alpha and beta chains form an alternating ring which encloses part of the gamma chain. F(1) is attached to F(0) by a central stalk formed by the gamma and epsilon chains, while a peripheral stalk is formed by the delta and b chains.

The protein resides in the cell inner membrane. In terms of biological role, f(1)F(0) ATP synthase produces ATP from ADP in the presence of a proton or sodium gradient. F-type ATPases consist of two structural domains, F(1) containing the extramembraneous catalytic core and F(0) containing the membrane proton channel, linked together by a central stalk and a peripheral stalk. During catalysis, ATP synthesis in the catalytic domain of F(1) is coupled via a rotary mechanism of the central stalk subunits to proton translocation. Functionally, key component of the F(0) channel; it plays a direct role in translocation across the membrane. A homomeric c-ring of between 10-14 subunits forms the central stalk rotor element with the F(1) delta and epsilon subunits. This chain is ATP synthase subunit c, found in Shewanella denitrificans (strain OS217 / ATCC BAA-1090 / DSM 15013).